Here is a 745-residue protein sequence, read N- to C-terminus: Ribosomal protein S6 kinase alpha-6 (745 aa).

Positions 1–28 are disordered; sequence MLPFAPQDEPWDREMEVFSGGGASSGEV. Residues 73-330 enclose the Protein kinase 1 domain; sequence FELLKVLGQG…VEEIKRHLFF (258 aa). Residues 79–87 and Lys105 each bind ATP; that span reads LGQGSFGKV. Catalysis depends on Asp198, which acts as the Proton acceptor. Phosphoserine is present on residues Ser232, Ser372, and Ser389. Residues 331–400 enclose the AGC-kinase C-terminal domain; sequence ANIDWDKLYK…VATSIAEEYK (70 aa). One can recognise a Protein kinase 2 domain in the interval 426-683; sequence YELKEDIGVG…AEQILKHSWI (258 aa). ATP-binding positions include 432–440 and Lys455; that span reads IGVGSYSVC. Asp543 (proton acceptor) is an active-site residue. Position 581 is a phosphothreonine (Thr581).

It belongs to the protein kinase superfamily. AGC Ser/Thr protein kinase family. S6 kinase subfamily. In terms of assembly, forms a complex with MAPK3/ERK1 but not with MAPK9 or MAPK14 in serum-starved cells. Mg(2+) serves as cofactor. Post-translationally, phosphorylated at Ser-232, Ser-372, and Ser-389 in serum-starved cells.

It is found in the cytoplasm. The protein resides in the cytosol. Its subcellular location is the nucleus. It carries out the reaction L-seryl-[protein] + ATP = O-phospho-L-seryl-[protein] + ADP + H(+). The catalysed reaction is L-threonyl-[protein] + ATP = O-phospho-L-threonyl-[protein] + ADP + H(+). With respect to regulation, constitutively activated by phosphorylation at Ser-232, Ser-372, and Ser-389 in serum-starved cells. Does not require growth factor stimulation for significant kinase activity. Its function is as follows. Constitutively active serine/threonine-protein kinase that exhibits growth-factor-independent kinase activity and that may participate in p53/TP53-dependent cell growth arrest signaling and play an inhibitory role during embryogenesis. This chain is Ribosomal protein S6 kinase alpha-6 (RPS6KA6), found in Homo sapiens (Human).